Reading from the N-terminus, the 173-residue chain is Translation initiation factor IF-3 (173 aa).

The protein belongs to the IF-3 family. As to quaternary structure, monomer.

The protein resides in the cytoplasm. Its function is as follows. IF-3 binds to the 30S ribosomal subunit and shifts the equilibrium between 70S ribosomes and their 50S and 30S subunits in favor of the free subunits, thus enhancing the availability of 30S subunits on which protein synthesis initiation begins. The protein is Translation initiation factor IF-3 of Methylobacterium sp. (strain 4-46).